Reading from the N-terminus, the 594-residue chain is MAKLNRSNIGLSLLLSMFLANFITDLEASSHQDLNQPYRTGYHFQPLKNWMNDPNGPMIYKGIYHLFYQYNPYGAVWDVRIVWGHSTSVDLVNWISQPPAFNPSQPSDINGCWSGSVTILPNGKPVILYTGIDQNKGQVQNVAVPVNISDPYLREWSKPPQNPLMTTNAVNGINPDRFRDPTTAWLGRDGEWRVIVGSSTDDRRGLAILYKSRDFFNWTQSMKPLHYEDLTGMWECPDFFPVSITGSDGVETSSVGENGIKHVLKVSLIETLHDYYTIGSYDREKDVYVPDLGFVQNESAPRLDYGKYYASKTFYDDVKKRRILWGWVNESSPAKDDIEKGWSGLQSFPRKIWLDESGKELLQWPIEEIETLRGQQVNWQKKVLKAGSTLQVHGVTAAQADVEVSFKVKELEKADVIEPSWTDPQKICSQGDLSVMSGLGPFGLMVLASNDMEEYTSVYFRIFKSNDDTNKKTKYVVLMCSDQSRSSLNDENDKSTFGAFVAIDPSHQTISLRTLIDHSIVESYGGGGRTCITSRVYPKLAIGENANLFVFNKGTQSVDILTLSAWSLKSAQINGDLMSPFIEREESRSPNHQF.

Positions Met-1–Ala-28 are cleaved as a signal peptide. Residues Trp-50–Asp-53, Gln-69, Trp-77, and Trp-113–Ser-114 contribute to the substrate site. The active site involves Asp-53. N-linked (GlcNAc...) asparagine glycosylation occurs at Asn-147. Residue Arg-179 to Asp-180 participates in substrate binding. Asn-217 carries an N-linked (GlcNAc...) asparagine glycan. Residue Glu-235 coordinates substrate. N-linked (GlcNAc...) asparagine glycosylation is found at Asn-297 and Asn-329. The cysteines at positions 428 and 480 are disulfide-linked.

This sequence belongs to the glycosyl hydrolase 32 family. In terms of tissue distribution, expressed in seedlings, leaves, flowers, and seeds.

The protein resides in the secreted. The protein localises to the extracellular space. Its subcellular location is the apoplast. It is found in the cell wall. The catalysed reaction is Hydrolysis of terminal, non-reducing (2-&gt;1)- and (2-&gt;6)-linked beta-D-fructofuranose residues in fructans.. In terms of biological role, 6-fructan exohydrolase that can use phlein, levan, neokestose, levanbiose, 6-kestose, and 1-kestose as substrates. The chain is Beta-fructofuranosidase, insoluble isoenzyme CWINV3 (CWINV3) from Arabidopsis thaliana (Mouse-ear cress).